We begin with the raw amino-acid sequence, 490 residues long: Cytochrome P450 71A22 (490 aa).

Residues 2–22 form a helical membrane-spanning segment; that stretch reads ESMIRIILLSLIIFITILFFI. Residue C432 participates in heme binding.

It belongs to the cytochrome P450 family. It depends on heme as a cofactor.

It is found in the membrane. The protein is Cytochrome P450 71A22 (CYP71A22) of Arabidopsis thaliana (Mouse-ear cress).